Here is a 324-residue protein sequence, read N- to C-terminus: 3-hydroxyisobutyrate dehydrogenase, mitochondrial (324 aa).

The N-terminal 25 residues, 1–25 (MSLRVMSPAMLNAWSQTLVRAMSTQ), are a transit peptide targeting the mitochondrion. NAD(+)-binding positions include 29–58 (KNIG…HVFD), 92–93 (LP), and Thr121. The active site involves Lys196. Lys271 contributes to the NAD(+) binding site.

This sequence belongs to the HIBADH-related family. 3-hydroxyisobutyrate dehydrogenase subfamily.

The protein resides in the mitochondrion. It catalyses the reaction 3-hydroxy-2-methylpropanoate + NAD(+) = 2-methyl-3-oxopropanoate + NADH + H(+). Its pathway is amino-acid degradation; L-valine degradation. The protein is 3-hydroxyisobutyrate dehydrogenase, mitochondrial of Drosophila melanogaster (Fruit fly).